A 151-amino-acid chain; its full sequence is Arginine regulator (151 aa).

This sequence belongs to the ArgR family.

The protein resides in the cytoplasm. It participates in amino-acid degradation; L-arginine degradation via ADI pathway. Its function is as follows. Regulates the transcription of the arc operon, involved in arginine catabolism. The polypeptide is Arginine regulator (argR1) (Clostridium perfringens (strain 13 / Type A)).